A 309-amino-acid polypeptide reads, in one-letter code: NAD kinase (309 aa).

Residue D89 is the Proton acceptor of the active site. NAD(+) is bound by residues D89–G90, N163–E164, H174, R191, D193, and T204–S209.

It belongs to the NAD kinase family. A divalent metal cation serves as cofactor.

It is found in the cytoplasm. It catalyses the reaction NAD(+) + ATP = ADP + NADP(+) + H(+). Functionally, involved in the regulation of the intracellular balance of NAD and NADP, and is a key enzyme in the biosynthesis of NADP. Catalyzes specifically the phosphorylation on 2'-hydroxyl of the adenosine moiety of NAD to yield NADP. The protein is NAD kinase of Shewanella sp. (strain MR-4).